We begin with the raw amino-acid sequence, 337 residues long: DNA-directed RNA polymerase subunit alpha (337 aa).

Residues 1–233 (MVREDVVGST…DLLIPFLHAE (233 aa)) form an alpha N-terminal domain (alpha-NTD) region. Positions 265 to 337 (KGIPLTCIFI…FAINLLNKKL (73 aa)) are alpha C-terminal domain (alpha-CTD).

Belongs to the RNA polymerase alpha chain family. In plastids the minimal PEP RNA polymerase catalytic core is composed of four subunits: alpha, beta, beta', and beta''. When a (nuclear-encoded) sigma factor is associated with the core the holoenzyme is formed, which can initiate transcription.

The protein resides in the plastid. It localises to the chloroplast. The catalysed reaction is RNA(n) + a ribonucleoside 5'-triphosphate = RNA(n+1) + diphosphate. In terms of biological role, DNA-dependent RNA polymerase catalyzes the transcription of DNA into RNA using the four ribonucleoside triphosphates as substrates. In Phalaenopsis aphrodite subsp. formosana (Moth orchid), this protein is DNA-directed RNA polymerase subunit alpha.